We begin with the raw amino-acid sequence, 434 residues long: D-amino acid dehydrogenase (434 aa).

3-17 (VLVLGSGVIGTTSAW) lines the FAD pocket.

Belongs to the DadA oxidoreductase family. It depends on FAD as a cofactor.

The catalysed reaction is a D-alpha-amino acid + A + H2O = a 2-oxocarboxylate + AH2 + NH4(+). The protein operates within amino-acid degradation; D-alanine degradation; NH(3) and pyruvate from D-alanine: step 1/1. Functionally, oxidative deamination of D-amino acids. This is D-amino acid dehydrogenase from Stenotrophomonas maltophilia (strain R551-3).